Here is a 527-residue protein sequence, read N- to C-terminus: Rhamnogalacturonate lyase A (527 aa).

A signal peptide spans 1–19 (MLKASLLSFVAFTAQVAHA). Disulfide bonds link Cys-49–Cys-92 and Cys-183–Cys-192. A glycan (N-linked (GlcNAc...) asparagine) is linked at Asn-350.

The protein belongs to the polysaccharide lyase 4 family.

Its subcellular location is the secreted. It catalyses the reaction Endotype eliminative cleavage of L-alpha-rhamnopyranosyl-(1-&gt;4)-alpha-D-galactopyranosyluronic acid bonds of rhamnogalacturonan I domains in ramified hairy regions of pectin leaving L-rhamnopyranose at the reducing end and 4-deoxy-4,5-unsaturated D-galactopyranosyluronic acid at the non-reducing end.. Pectinolytic enzyme that has a positive effect in the apple hot-mash liquefaction process. This endolyase hydrolyzes the alpha-L-rhamnopyranosyl-(1,4)-alpha-D-galacturonopyranosyl glycosidic linkage by beta-elimination, thereby generating oligosaccharides terminating at the non-reducing end with a hex-4-enopyranosyluronic acid residue. This Aspergillus aculeatus protein is Rhamnogalacturonate lyase A (rglA).